Reading from the N-terminus, the 332-residue chain is 2-hydroxyacid dehydrogenase homolog 2 (332 aa).

NAD(+) contacts are provided by residues 154-155, 233-235, and Asp259; these read KI and TSR. Arg235 is an active-site residue. Residue Glu264 is part of the active site. The active-site Proton donor is the His296. Residue 296–299 coordinates NAD(+); it reads HQAF.

The protein belongs to the D-isomer specific 2-hydroxyacid dehydrogenase family.

The protein localises to the cytoplasm. Its subcellular location is the nucleus. This chain is 2-hydroxyacid dehydrogenase homolog 2, found in Schizosaccharomyces pombe (strain 972 / ATCC 24843) (Fission yeast).